A 250-amino-acid polypeptide reads, in one-letter code: Probable transcriptional regulatory protein ROP_68700 (250 aa).

It belongs to the TACO1 family.

It is found in the cytoplasm. The chain is Probable transcriptional regulatory protein ROP_68700 from Rhodococcus opacus (strain B4).